Here is a 352-residue protein sequence, read N- to C-terminus: MSKTMKGVSKQAPGYDQMAFIDLSVPEATDDKVLIKVAYTGICGSDIHTFKGEYKNPTTPVVLGHEFSGQVVEVGANVPKVKVGDRVTSETTFYVCGECDYCKEKQYNLCPHRKGIGTQQNGSMANYVLAREESIHLLPDHLSYEGAAMSEPLACCVHAMYQKSHLELKDTIIIMGPGPIGLYLLQIAKEIGAFVIMTGITKDAHRLALAKKLGADVIVDTMKEDLAKVVNEITDGYGVDKVYDASGAVPAVNASLPLIRKQGQFIQVGLFANKMVDLDTESIIQREIEYIGSRSQNPYDWPIAIHLLAKGAINIDEMITKKYPLTEWREAFDKVMEGNEIKVMIESNPEEF.

Mn(2+)-binding residues include cysteine 43, histidine 65, cysteine 96, cysteine 99, cysteine 102, cysteine 110, and glutamate 151.

This sequence belongs to the zinc-containing alcohol dehydrogenase family. In terms of assembly, homotetramer. The cofactor is Mn(2+).

The catalysed reaction is D-arabinitol 1-phosphate + NAD(+) = D-xylulose 5-phosphate + NADH + H(+). Inhibited by EDTA, 4-hydroxymercuribenzoic acid (PHMB), mercury and zinc ions at a concentration of 2 mM. Involved in the arabitol catabolism via the arabitol phosphate route. Catalyzes only the transformation of D-arabitol 1-phosphate (Arb1P) and D-arabitol 5-phosphate (Arb5P) into D-xylulose 5-phosphate (Xlu5P) and ribulose 5-phosphate, respectively. It can use both NAD and NADP. The polypeptide is D-arabitol-phosphate dehydrogenase (Enterococcus avium (Streptococcus avium)).